The following is a 350-amino-acid chain: Protein-glutamate methylesterase/protein-glutamine glutaminase 1 (350 aa).

The Response regulatory domain maps to 6 to 123; the sequence is RVLVVDDSAL…GRSVENYAEE (118 aa). Asp-57 bears the 4-aspartylphosphate mark. Residues 159-350 enclose the CheB-type methylesterase domain; it reads LGASGKIIFV…ARRVLGAVSA (192 aa). Active-site residues include Ser-171, His-197, and Asp-293.

The protein belongs to the CheB family. Post-translationally, phosphorylated by CheA. Phosphorylation of the N-terminal regulatory domain activates the methylesterase activity.

The protein localises to the cytoplasm. The enzyme catalyses [protein]-L-glutamate 5-O-methyl ester + H2O = L-glutamyl-[protein] + methanol + H(+). It catalyses the reaction L-glutaminyl-[protein] + H2O = L-glutamyl-[protein] + NH4(+). Functionally, involved in chemotaxis. Part of a chemotaxis signal transduction system that modulates chemotaxis in response to various stimuli. Catalyzes the demethylation of specific methylglutamate residues introduced into the chemoreceptors (methyl-accepting chemotaxis proteins or MCP) by CheR. Also mediates the irreversible deamidation of specific glutamine residues to glutamic acid. This Dechloromonas aromatica (strain RCB) protein is Protein-glutamate methylesterase/protein-glutamine glutaminase 1.